The sequence spans 350 residues: Derriere protein (350 aa).

An N-terminal signal peptide occupies residues 1–16; the sequence is MLSLACFFSFLLMVKS. A propeptide spanning residues 17–236 is cleaved from the precursor; the sequence is SPLTFQERML…SSCKTPRAKR (220 aa). Residues asparagine 171 and asparagine 202 are each glycosylated (N-linked (GlcNAc...) asparagine). 3 disulfide bridges follow: cysteine 249/cysteine 315, cysteine 278/cysteine 347, and cysteine 282/cysteine 349.

Belongs to the TGF-beta family. In terms of assembly, homodimer; disulfide-linked. Also forms heterodimers with other TGF-beta family members including nodal2/nr-2 and bmp4.

It is found in the secreted. Required for posterior mesoderm formation during embryogenesis. Acts indirectly to suppress head formation by altering mesodermal patterning. Also involved in the establishment of left-right axis asymmetry, acting upstream of nodal/nr-1. Can exert long-range effects in the embryo. The polypeptide is Derriere protein (Xenopus tropicalis (Western clawed frog)).